The following is a 231-amino-acid chain: NADH-ubiquinone oxidoreductase chain 4 (231 aa).

6 helical membrane-spanning segments follow: residues 1–21, 34–54, 63–85, 89–111, 128–148, and 156–176; these read PIAG…YGMI, MFMP…LTCL, IAYS…TPWG, AMAL…NTTY, ILPM…AIPP, and FLIM…LGLS.

This sequence belongs to the complex I subunit 4 family.

Its subcellular location is the mitochondrion membrane. The enzyme catalyses a ubiquinone + NADH + 5 H(+)(in) = a ubiquinol + NAD(+) + 4 H(+)(out). Its function is as follows. Core subunit of the mitochondrial membrane respiratory chain NADH dehydrogenase (Complex I) that is believed to belong to the minimal assembly required for catalysis. Complex I functions in the transfer of electrons from NADH to the respiratory chain. The immediate electron acceptor for the enzyme is believed to be ubiquinone. This is NADH-ubiquinone oxidoreductase chain 4 (MT-ND4) from Bothriechis schlegelii (Eyelash palm pitviper).